A 208-amino-acid chain; its full sequence is Imidazoleglycerol-phosphate dehydratase (208 aa).

The protein belongs to the imidazoleglycerol-phosphate dehydratase family.

It catalyses the reaction D-erythro-1-(imidazol-4-yl)glycerol 3-phosphate = 3-(imidazol-4-yl)-2-oxopropyl phosphate + H2O. It participates in amino-acid biosynthesis; L-histidine biosynthesis; L-histidine from 5-phospho-alpha-D-ribose 1-diphosphate: step 6/9. In Trichoderma harzianum (Hypocrea lixii), this protein is Imidazoleglycerol-phosphate dehydratase (his3).